The primary structure comprises 570 residues: Structure-specific endonuclease subunit EME1 (570 aa).

Residues 1–12 (MALKKSSPSLDS) show a composition bias toward low complexity. Residues 1–42 (MALKKSSPSLDSGDSDSEELPTFAFLKKEPSSTKRRQPEREE) form a disordered region. Residues S12 and S15 each carry the phosphoserine modification. Residues 26–42 (LKKEPSSTKRRQPEREE) are compositionally biased toward basic and acidic residues. Residues S84, S85, and S87 each carry the phosphoserine modification. K103 is covalently cross-linked (Glycyl lysine isopeptide (Lys-Gly) (interchain with G-Cter in SUMO2)). S111 and S117 each carry phosphoserine. Residues K136 and K141 each participate in a glycyl lysine isopeptide (Lys-Gly) (interchain with G-Cter in SUMO2) cross-link. At T150 the chain carries Phosphothreonine. Disordered regions lie at residues 187–233 (KTNS…ERKN) and 372–400 (AQNP…ASIG). Positions 220-233 (RQKESTLRRQERKN) are enriched in basic and acidic residues. Residues 250 to 456 (KHIIVVLDPV…PFKKLRDETT (207 aa)) are nuclease-like domain; forms the post-nick DNA binding interface and is involved in DNA recognition and bending. The interval 476-570 (RGLALVWRRQ…QPHLSLDSAD (95 aa)) is helix-hairpin-helix (2HhH); forms the pre-nick DNA binding interface and is involved in DNA recognition and bending.

Belongs to the EME1/MMS4 family. As to quaternary structure, part of the heterodimeric MUS81-EME1 complex.

The protein resides in the nucleus. Its subcellular location is the nucleolus. Non-catalytic subunit of the structure-specific, heterodimeric DNA endonuclease MUS81-EME1 which is involved in the maintenance of genome stability. In the complex, EME1 is required for DNA cleavage, participating in DNA recognition and bending. MUS81-EME1 cleaves 3'-flaps and nicked Holliday junctions, and exhibit limited endonuclease activity with 5' flaps and nicked double-stranded DNAs. Active during prometaphase, MUS81-EME1 resolves mitotic recombination intermediates, including Holliday junctions, which form during homologous recombination. This Homo sapiens (Human) protein is Structure-specific endonuclease subunit EME1.